Consider the following 201-residue polypeptide: uncharacterized protein (201 aa).

Belongs to the methyltransferase superfamily.

This is an uncharacterized protein from Bacillus subtilis (strain 168).